A 499-amino-acid chain; its full sequence is 3-beta-hydroxylase (499 aa).

A helical; Signal-anchor for type II membrane protein membrane pass occupies residues 2–22; sequence FSSFETLILSFVSLFFMMIFI. Cys-441 is a binding site for heme.

This sequence belongs to the cytochrome P450 family. It depends on heme as a cofactor.

It localises to the membrane. It carries out the reaction (+)-costunolide + reduced [NADPH--hemoprotein reductase] + O2 = 3beta-hydroxycostunolide + oxidized [NADPH--hemoprotein reductase] + H2O + H(+). The catalysed reaction is parthenolide + reduced [NADPH--hemoprotein reductase] + O2 = 3beta-hydroxyparthenolide + oxidized [NADPH--hemoprotein reductase] + H2O + H(+). It functions in the pathway secondary metabolite biosynthesis; terpenoid biosynthesis. Involved in the biosynthesis of germacrene-derived sesquiterpene lactones. Component of the parthenolide biosynthetic pathway; parthenolide and conjugates are promising anti-cancer drugs highly active against colon cancer cells. Catalyzes the conversion of costunolide and parthenolide to 3-beta-hydroxycostunolide and 3-beta-hydroxyparthenolide, respectively. This Tanacetum parthenium (Feverfew) protein is 3-beta-hydroxylase.